A 457-amino-acid polypeptide reads, in one-letter code: D-xylose transporter (457 aa).

Helical transmembrane passes span 14-34, 46-66, 81-101, 104-124, 131-151, 164-184, 244-264, 281-301, 309-329, and 338-358; these read ALGG…ILFI, GWVV…IGPS, IIFF…TLII, IILG…LAEL, GTVS…AYIT, WMLG…LILP, LIIG…TVLY, LLAH…AVAI, KIVN…SIGM, and AAII…ATWG. Gln138 lines the beta-D-xylose pocket. Beta-D-xylose-binding positions include 254-255 and Asn260; that span reads QQ. Beta-D-xylose-binding residues include Trp362 and Asn385. 2 consecutive transmembrane segments (helical) span residues 380–400 and 402–422; these read FASV…PSLL and FFGT…SIWF.

It belongs to the major facilitator superfamily. Sugar transporter (TC 2.A.1.1) family.

The protein localises to the cell membrane. Transport is inhibited by 6-deoxy-D-glucose. Functionally, uptake of D-xylose across the boundary membrane with the concomitant transport of protons into the cell (symport system). Transport is driven by the proton motive force generated by either malolactic fermentation or by the metabolism of D-glucose. In Levilactobacillus brevis (Lactobacillus brevis), this protein is D-xylose transporter.